We begin with the raw amino-acid sequence, 658 residues long: Endoglin (658 aa).

Positions 1-25 (MDRGTLPLAVALLLASCSLSPTSLA) are cleaved as a signal peptide. The segment at 26–46 (ETVHCDLQPVGPERGEVTYTT) is OR1, N-terminal part. The tract at residues 26–337 (ETVHCDLQPV…SSCGGRLQTS (312 aa)) is required for interaction with GDF2. Residues 26-586 (ETVHCDLQPV…PDLSGCTSKG (561 aa)) lie on the Extracellular side of the membrane. Disulfide bonds link cysteine 30-cysteine 207, cysteine 53-cysteine 182, cysteine 242-cysteine 330, cysteine 350-cysteine 382, cysteine 363-cysteine 442, cysteine 394-cysteine 412, and cysteine 493-cysteine 549. The segment at 47-199 (SQVSKGCVAQ…MGRTLEWRPR (153 aa)) is OR2. N-linked (GlcNAc...) asparagine glycosylation is found at asparagine 88, asparagine 102, asparagine 121, and asparagine 134. Positions 200 to 330 (TPALVRGCHL…SIVSLHASSC (131 aa)) are OR1, C-terminal part. An essential for interaction with GDF2 region spans residues 270–282 (QIWTTGEYSFKIF). Asparagine 307 is a glycosylation site (N-linked (GlcNAc...) asparagine). The ZP domain occupies 363 to 533 (CADDAMTLVL…PEGDPRFSFL (171 aa)). The Cell attachment site motif lies at 399–401 (RGD). A helical membrane pass occupies residues 587–611 (LVLPAVLGITFGAFLIGALLTAALW). At 612–658 (YIYSHTRSPSKREPVVAVAAPASSESSSTNHSIGSTQSTPCSTSSMA) the chain is on the cytoplasmic side. Over residues 626–639 (VVAVAAPASSESSS) the composition is skewed to low complexity. Residues 626–658 (VVAVAAPASSESSSTNHSIGSTQSTPCSTSSMA) form a disordered region. Residues 640 to 658 (TNHSIGSTQSTPCSTSSMA) show a composition bias toward polar residues. Phosphoserine; by TGFBR1 is present on residues serine 646 and serine 649.

In terms of assembly, homodimer; disulfide-linked. Forms a heteromeric complex with the signaling receptors for transforming growth factor-beta: TGFBR1 and/or TGFBR2. It is able to bind TGFB1 and TGFB2 with high affinity, but not TGFB3. Interacts with GDF2, forming a heterotetramer with a 2:2 stoichiometry. Interacts with ACVRL1. Can form a heteromeric complex with GDF2 and ACVRL1. Interacts with BMP10. Interacts with DYNLT4. Interacts with ARRB2. Detected on umbilical veil endothelial cells. Detected in placenta (at protein level). Detected on endothelial cells.

The protein resides in the cell membrane. Its function is as follows. Vascular endothelium glycoprotein that plays an important role in the regulation of angiogenesis. Required for normal structure and integrity of adult vasculature. Regulates the migration of vascular endothelial cells. Required for normal extraembryonic angiogenesis and for embryonic heart development. May regulate endothelial cell shape changes in response to blood flow, which drive vascular remodeling and establishment of normal vascular morphology during angiogenesis. May play a critical role in the binding of endothelial cells to integrins and/or other RGD receptors. Acts as a TGF-beta coreceptor and is involved in the TGF-beta/BMP signaling cascade that ultimately leads to the activation of SMAD transcription factors. Required for GDF2/BMP9 signaling through SMAD1 in endothelial cells and modulates TGFB1 signaling through SMAD3. The polypeptide is Endoglin (ENG) (Homo sapiens (Human)).